A 100-amino-acid polypeptide reads, in one-letter code: Small ribosomal subunit protein uS14c (100 aa).

It belongs to the universal ribosomal protein uS14 family. In terms of assembly, part of the 30S ribosomal subunit.

Its subcellular location is the plastid. It localises to the chloroplast. Its function is as follows. Binds 16S rRNA, required for the assembly of 30S particles. The protein is Small ribosomal subunit protein uS14c of Morus indica (Mulberry).